Consider the following 416-residue polypeptide: UDP-N-acetylglucosamine 1-carboxyvinyltransferase (416 aa).

22 to 23 (KN) serves as a coordination point for phosphoenolpyruvate. UDP-N-acetyl-alpha-D-glucosamine is bound at residue Arg-91. The active-site Proton donor is Cys-115. Cys-115 bears the 2-(S-cysteinyl)pyruvic acid O-phosphothioketal mark. Residues 120 to 124 (RPIDL), Asp-305, and Ile-327 each bind UDP-N-acetyl-alpha-D-glucosamine.

This sequence belongs to the EPSP synthase family. MurA subfamily.

It is found in the cytoplasm. The enzyme catalyses phosphoenolpyruvate + UDP-N-acetyl-alpha-D-glucosamine = UDP-N-acetyl-3-O-(1-carboxyvinyl)-alpha-D-glucosamine + phosphate. Its pathway is cell wall biogenesis; peptidoglycan biosynthesis. Cell wall formation. Adds enolpyruvyl to UDP-N-acetylglucosamine. In Buchnera aphidicola subsp. Acyrthosiphon pisum (strain APS) (Acyrthosiphon pisum symbiotic bacterium), this protein is UDP-N-acetylglucosamine 1-carboxyvinyltransferase.